Reading from the N-terminus, the 164-residue chain is Phosphopantetheine adenylyltransferase (164 aa).

Thr-10 is a substrate binding site. ATP-binding positions include Thr-10 to Phe-11 and His-18. The substrate site is built by Lys-42, Leu-74, and Arg-88. Residues Gly-89–Arg-91, Glu-99, and Asn-124–Thr-130 each bind ATP.

Belongs to the bacterial CoaD family. As to quaternary structure, homohexamer. Mg(2+) is required as a cofactor.

The protein resides in the cytoplasm. The enzyme catalyses (R)-4'-phosphopantetheine + ATP + H(+) = 3'-dephospho-CoA + diphosphate. It participates in cofactor biosynthesis; coenzyme A biosynthesis; CoA from (R)-pantothenate: step 4/5. Its function is as follows. Reversibly transfers an adenylyl group from ATP to 4'-phosphopantetheine, yielding dephospho-CoA (dPCoA) and pyrophosphate. The polypeptide is Phosphopantetheine adenylyltransferase (Pseudoalteromonas translucida (strain TAC 125)).